A 113-amino-acid chain; its full sequence is Hydrogenase maturation factor HypA (113 aa).

Histidine 2 contacts Ni(2+). Zn(2+)-binding residues include cysteine 73, cysteine 76, cysteine 89, and cysteine 92.

Belongs to the HypA/HybF family.

Involved in the maturation of [NiFe] hydrogenases. Required for nickel insertion into the metal center of the hydrogenase. The protein is Hydrogenase maturation factor HypA of Azorhizobium caulinodans (strain ATCC 43989 / DSM 5975 / JCM 20966 / LMG 6465 / NBRC 14845 / NCIMB 13405 / ORS 571).